A 316-amino-acid chain; its full sequence is Acetyl-coenzyme A carboxylase carboxyl transferase subunit alpha (316 aa).

The CoA carboxyltransferase C-terminal domain maps to 40-290 (KARKELQRIY…RERFAHHLQE (251 aa)).

This sequence belongs to the AccA family. Acetyl-CoA carboxylase is a heterohexamer composed of biotin carboxyl carrier protein (AccB), biotin carboxylase (AccC) and two subunits each of ACCase subunit alpha (AccA) and ACCase subunit beta (AccD).

Its subcellular location is the cytoplasm. The catalysed reaction is N(6)-carboxybiotinyl-L-lysyl-[protein] + acetyl-CoA = N(6)-biotinyl-L-lysyl-[protein] + malonyl-CoA. It participates in lipid metabolism; malonyl-CoA biosynthesis; malonyl-CoA from acetyl-CoA: step 1/1. Component of the acetyl coenzyme A carboxylase (ACC) complex. First, biotin carboxylase catalyzes the carboxylation of biotin on its carrier protein (BCCP) and then the CO(2) group is transferred by the carboxyltransferase to acetyl-CoA to form malonyl-CoA. This is Acetyl-coenzyme A carboxylase carboxyl transferase subunit alpha from Acidithiobacillus ferrooxidans (strain ATCC 23270 / DSM 14882 / CIP 104768 / NCIMB 8455) (Ferrobacillus ferrooxidans (strain ATCC 23270)).